Reading from the N-terminus, the 258-residue chain is Cyclohexa-1,5-dienecarbonyl-CoA hydratase (258 aa).

The protein belongs to the enoyl-CoA hydratase/isomerase family.

The catalysed reaction is cyclohexa-1,5-diene-1-carbonyl-CoA + H2O = 6-hydroxycyclohex-1-ene-1-carbonyl-CoA. The protein operates within aromatic compound metabolism; benzoyl-CoA degradation. Catalyzes the hydration of cyclohexa-1,5-diene-1-carboxyl-CoA. In Thauera aromatica, this protein is Cyclohexa-1,5-dienecarbonyl-CoA hydratase (dch).